The sequence spans 274 residues: Putative deoxyribonuclease TATDN1 homolog (274 aa).

Residues Glu105, His139, His162, and Asp208 each contribute to the a divalent metal cation site.

The protein belongs to the metallo-dependent hydrolases superfamily. TatD-type hydrolase family. A divalent metal cation is required as a cofactor.

The protein localises to the nucleus. Putative deoxyribonuclease. The chain is Putative deoxyribonuclease TATDN1 homolog from Enterocytozoon bieneusi (strain H348) (Microsporidian parasite).